Here is a 466-residue protein sequence, read N- to C-terminus: UDP-N-acetylmuramoylalanine--D-glutamate ligase (466 aa).

Position 121-127 (121-127 (GTNGKST)) interacts with ATP.

Belongs to the MurCDEF family.

It localises to the cytoplasm. It carries out the reaction UDP-N-acetyl-alpha-D-muramoyl-L-alanine + D-glutamate + ATP = UDP-N-acetyl-alpha-D-muramoyl-L-alanyl-D-glutamate + ADP + phosphate + H(+). The protein operates within cell wall biogenesis; peptidoglycan biosynthesis. Cell wall formation. Catalyzes the addition of glutamate to the nucleotide precursor UDP-N-acetylmuramoyl-L-alanine (UMA). This is UDP-N-acetylmuramoylalanine--D-glutamate ligase from Nitrobacter winogradskyi (strain ATCC 25391 / DSM 10237 / CIP 104748 / NCIMB 11846 / Nb-255).